The following is a 240-amino-acid chain: MPRTLTDPTADRAAAFATDAAADGLTVSLIGSCVATLTGRSQRDLAAGVRTLLWKPDDTVVVHGASGRDPDAWASGGPVTVDAADGLTVACDGGHTAGALRVRFDAVHTATAFDAAGADATTVSGTEAALKDRVLDTPDLVEPGFQPLATERDTPAGPIDIYGRDADGTVTAVELKNVRAGPAAASQLQRYVAALRRTLHADATVRGILVAPAVTAKTRRLLADRGLTFSPVSPPGSRDR.

It belongs to the NucS endonuclease family.

The protein localises to the cytoplasm. Its function is as follows. Cleaves both 3' and 5' ssDNA extremities of branched DNA structures. This chain is Endonuclease NucS 1, found in Halobacterium salinarum (strain ATCC 700922 / JCM 11081 / NRC-1) (Halobacterium halobium).